We begin with the raw amino-acid sequence, 545 residues long: CTP synthase (545 aa).

The interval 1–266 (MTTNYIFVTG…DDYICKRFGL (266 aa)) is amidoligase domain. S14 is a CTP binding site. UTP is bound at residue S14. Residues 15-20 (SLGKGI) and D72 each bind ATP. Mg(2+) is bound by residues D72 and E140. Residues 147 to 149 (DIE), 187 to 192 (KTKPTQ), and K223 each bind CTP. UTP contacts are provided by residues 187–192 (KTKPTQ) and K223. An ATP-binding site is contributed by 239–241 (KDV). Residues 291-542 (TIGMVGKYIA…VKAAGEYQKR (252 aa)) form the Glutamine amidotransferase type-1 domain. G352 provides a ligand contact to L-glutamine. C379 functions as the Nucleophile; for glutamine hydrolysis in the catalytic mechanism. L-glutamine contacts are provided by residues 380 to 383 (LGMQ), E403, and R470. Active-site residues include H515 and E517.

Belongs to the CTP synthase family. Homotetramer.

It catalyses the reaction UTP + L-glutamine + ATP + H2O = CTP + L-glutamate + ADP + phosphate + 2 H(+). The catalysed reaction is L-glutamine + H2O = L-glutamate + NH4(+). It carries out the reaction UTP + NH4(+) + ATP = CTP + ADP + phosphate + 2 H(+). The protein operates within pyrimidine metabolism; CTP biosynthesis via de novo pathway; CTP from UDP: step 2/2. Its activity is regulated as follows. Allosterically activated by GTP, when glutamine is the substrate; GTP has no effect on the reaction when ammonia is the substrate. The allosteric effector GTP functions by stabilizing the protein conformation that binds the tetrahedral intermediate(s) formed during glutamine hydrolysis. Inhibited by the product CTP, via allosteric rather than competitive inhibition. In terms of biological role, catalyzes the ATP-dependent amination of UTP to CTP with either L-glutamine or ammonia as the source of nitrogen. Regulates intracellular CTP levels through interactions with the four ribonucleotide triphosphates. The protein is CTP synthase of Sodalis glossinidius (strain morsitans).